Consider the following 728-residue polypeptide: Histone demethylase JHD2 (728 aa).

One can recognise a JmjN domain in the interval 4-47 (IPALYPTEQEFKNPIDYLSNPHIKRLGVRYGMVKVVPPNGFCPP). The PHD-type zinc-finger motif lies at 235 to 285 (DDACIVCRKTNDPKRTILCDSCDKPFHIYCLSPPLERVPSGDWICNTCIVG). Residues 381 to 549 (KYCDHPMNLT…YGFGAITDYK (169 aa)) enclose the JmjC domain. Positions 427, 430, and 517 each coordinate Fe cation.

This sequence belongs to the JARID1 histone demethylase family. The cofactor is Fe(2+).

It localises to the nucleus. The enzyme catalyses N(6),N(6),N(6)-trimethyl-L-lysyl(4)-[histone H3] + 3 2-oxoglutarate + 3 O2 = L-lysyl(4)-[histone H3] + 3 formaldehyde + 3 succinate + 3 CO2. Its function is as follows. Histone demethylase that demethylates 'Lys-4' of histone H3, thereby playing a central role in histone code. Demethylates trimethylated H3 'Lys-4'. This is Histone demethylase JHD2 (JHD2) from Saccharomyces cerevisiae (strain ATCC 204508 / S288c) (Baker's yeast).